Here is a 108-residue protein sequence, read N- to C-terminus: UPF0060 membrane protein YE2027 (108 aa).

4 consecutive transmembrane segments (helical) span residues 6-26 (LLFFVTALAEIIGCFLPYLWL), 29-49 (GASMWLLLPAAASLALFVWLL), 59-79 (VYAAYGGVYVATALIWLRVVD), and 85-105 (LFDWVGAAVALVGMLIIVAGW).

Belongs to the UPF0060 family.

The protein resides in the cell inner membrane. The polypeptide is UPF0060 membrane protein YE2027 (Yersinia enterocolitica serotype O:8 / biotype 1B (strain NCTC 13174 / 8081)).